The primary structure comprises 309 residues: Malate dehydrogenase (309 aa).

NAD(+) is bound by residues 9–14 (GAGAVG) and Asp33. Residues Arg82 and Arg88 each coordinate substrate. NAD(+) contacts are provided by residues Asn95 and 118 to 120 (VTN). 2 residues coordinate substrate: Asn120 and Arg151. Residue His175 is the Proton acceptor of the active site.

It belongs to the LDH/MDH superfamily. MDH type 3 family.

It carries out the reaction (S)-malate + NAD(+) = oxaloacetate + NADH + H(+). In terms of biological role, catalyzes the reversible oxidation of malate to oxaloacetate. The polypeptide is Malate dehydrogenase (Thermomicrobium roseum (strain ATCC 27502 / DSM 5159 / P-2)).